Reading from the N-terminus, the 284-residue chain is 1D-myo-inositol 2-acetamido-2-deoxy-alpha-D-glucopyranoside deacetylase (284 aa).

Zn(2+) contacts are provided by His12, Asp15, and His146.

The protein belongs to the MshB deacetylase family. Requires Zn(2+) as cofactor.

It carries out the reaction 1D-myo-inositol 2-acetamido-2-deoxy-alpha-D-glucopyranoside + H2O = 1D-myo-inositol 2-amino-2-deoxy-alpha-D-glucopyranoside + acetate. In terms of biological role, catalyzes the deacetylation of 1D-myo-inositol 2-acetamido-2-deoxy-alpha-D-glucopyranoside (GlcNAc-Ins) in the mycothiol biosynthesis pathway. The sequence is that of 1D-myo-inositol 2-acetamido-2-deoxy-alpha-D-glucopyranoside deacetylase from Mycolicibacterium gilvum (strain PYR-GCK) (Mycobacterium gilvum (strain PYR-GCK)).